We begin with the raw amino-acid sequence, 95 residues long: MTKSELIEKLATRQSQMSAKEVESAIKEMLEQMAQTLEGGDRIEIRGFGSFSLHFRAPRTGRNPKTGTSVDLDGKYVPHFKPGKELRERVDAINA.

A disordered region spans residues 56 to 76 (RAPRTGRNPKTGTSVDLDGKY).

Belongs to the bacterial histone-like protein family. Heterodimer of an alpha and a beta chain.

In terms of biological role, this protein is one of the two subunits of integration host factor, a specific DNA-binding protein that functions in genetic recombination as well as in transcriptional and translational control. This is Integration host factor subunit beta from Shewanella sediminis (strain HAW-EB3).